Consider the following 43-residue polypeptide: uncharacterized protein (43 aa).

A disordered region spans residues Met1–Asn43. Residues Glu20–Gln35 are compositionally biased toward acidic residues.

This is an uncharacterized protein from Dictyostelium discoideum (Social amoeba).